The following is a 361-amino-acid chain: sn-glycerol-3-phosphate import ATP-binding protein UgpC (361 aa).

The 232-residue stretch at 4–235 (LSLKGVRKSY…PATVFVAGFI (232 aa)) folds into the ABC transporter domain. 37–44 (GPSGCGKS) contributes to the ATP binding site.

This sequence belongs to the ABC transporter superfamily. sn-glycerol-3-phosphate importer (TC 3.A.1.1.3) family. The complex is composed of two ATP-binding proteins (UgpC), two transmembrane proteins (UgpA and UgpE) and a solute-binding protein (UgpB).

The protein resides in the cell inner membrane. The enzyme catalyses sn-glycerol 3-phosphate(out) + ATP + H2O = sn-glycerol 3-phosphate(in) + ADP + phosphate + H(+). Part of the ABC transporter complex UgpBAEC involved in sn-glycerol-3-phosphate (G3P) import. Responsible for energy coupling to the transport system. This Burkholderia cenocepacia (strain HI2424) protein is sn-glycerol-3-phosphate import ATP-binding protein UgpC.